A 237-amino-acid polypeptide reads, in one-letter code: F-box only protein 50 (237 aa).

The region spanning 31-231 is the FBA domain; that stretch reads VFETKPFERN…VTDSSVIVKA (201 aa). The tract at residues 40-82 is disordered; it reads NLLQNPSPYGVNHTVPPPEPHRSGIPPPSDRPPQLEPEGNFSG. The span at 64 to 74 shows a compositional bias: pro residues; the sequence is IPPPSDRPPQL.

As to expression, expressed in nonspecific cytotoxic cells (NCC).

Its subcellular location is the cytoplasm. Its function is as follows. May promote cell proliferation. The sequence is that of F-box only protein 50 (nccrp1) from Danio rerio (Zebrafish).